Consider the following 228-residue polypeptide: Protein CWC15 homolog A (228 aa).

The interval 1-126 (MTTAARPTFE…DEDSDDDTAA (126 aa)) is disordered. The segment covering 24 to 34 (SQLSKQYSSRD) has biased composition (polar residues). A compositionally biased stretch (basic and acidic residues) spans 52–84 (EEVRSRDFRRELEERERVVARDKNRDRPTREHT). The segment covering 102-124 (DADDPLTDEDGDEDSDEDSDDDT) has biased composition (acidic residues). Positions 121-165 (DDDTAALLAELEKIKKERAEEKDRKELEQKAEEERIRMENILSGN) form a coiled coil.

The protein belongs to the CWC15 family. As to quaternary structure, identified in the spliceosome C complex. Component of the minor spliceosome, which splices U12-type introns.

It is found in the nucleus. In terms of biological role, involved in pre-mRNA splicing as component of the spliceosome. The chain is Protein CWC15 homolog A (cwc15-a) from Xenopus laevis (African clawed frog).